Reading from the N-terminus, the 421-residue chain is Proton/sodium-glutamate symport protein (421 aa).

Over 1–3 (MRK) the chain is Cytoplasmic. Residues 4-24 (IGLAWQIFIGLILGIIVGAIF) traverse the membrane as a helical segment. Residues 25–43 (YGNPKVATYLQPIGDIFLR) are Extracellular-facing. The chain crosses the membrane as a helical span at residues 44-64 (LIKMIVIPIVISSLVVGVASV). At 65–77 (GDLKKLGKLGGKT) the chain is on the cytoplasmic side. A helical transmembrane segment spans residues 78-98 (IIYFEIITTIAIVVGLLAANI). Topologically, residues 99–148 (FQPGTGVNMKSLEKTDIQSYVDTTNEVQHHSMVETFVNIVPKNIFESLTK) are extracellular. A helical membrane pass occupies residues 149–169 (GDMLPIIFFSVMFGLGVAAIG). The Cytoplasmic segment spans residues 170–198 (EKGKPVLQFFQGTAEAMFYVTNQIMKFAP). Residues 199-219 (FGVFALIGVTVSKFGVESLIP) form a helical membrane-spanning segment. At 220-222 (LSK) the chain is on the extracellular side. Residues 223-243 (LVIVVYATMVFFIFVVLGGVA) traverse the membrane as a helical segment. Lys-244 is a topological domain (cytoplasmic). A helical transmembrane segment spans residues 245 to 265 (LFGINIFHIIKILKDELILAY). Over 266-306 (STASSETVLPKIMEKMENFGCPKAITSFVIPTGYSFNLDGS) the chain is Extracellular. A helical membrane pass occupies residues 307–327 (TLYQALAAIFIAQLYGIDMPI). Topologically, residues 328-330 (SQQ) are cytoplasmic. The next 2 membrane-spanning stretches (helical) occupy residues 331 to 351 (ISLL…PGVS) and 352 to 372 (FVVL…LAFI). At 373–421 (AGIDRILDMARTAVNVIGNSLAAIIMSKWEGQYNEEKGKQYIAQLQQSA) the chain is on the cytoplasmic side.

The protein belongs to the dicarboxylate/amino acid:cation symporter (DAACS) (TC 2.A.23) family. As to quaternary structure, homotrimer.

Its subcellular location is the cell membrane. Functionally, this carrier protein is part of the Na(+)-dependent, binding-protein-independent glutamate-aspartate transport system. In Geobacillus stearothermophilus (Bacillus stearothermophilus), this protein is Proton/sodium-glutamate symport protein (gltT).